Consider the following 351-residue polypeptide: MVPMDRLLQIVRRFEFLEARLSAGAAPAEIAALSREYAELKPVVAEISAYRTALEDLAEAEAMLSDPEMRALAEDEIPALRARIPGMEQALRLALLPKDAADARPAILEIRPGTGGEEAALFAGDLLRMYQRYAEGQGWRFELLDLAPSELGGIREATARVEGEGAFARLKYESGVHRVQRVPETEAQGRIHTSAATVAVLPEAEEVDLEIPAADIRIDTMRSSGAGGQHVNTTDSAVRITHLPTGIIVTSSEKSQHRNREIAMQVLRARLYDLERQRLADARSADRKAQVGSGDRSERIRTYNFPQGRMTDHRINLTLYALPQIMAGDLSEVISALTAHDQAARLAEMEA.

Q229 is modified (N5-methylglutamine).

The protein belongs to the prokaryotic/mitochondrial release factor family. Methylated by PrmC. Methylation increases the termination efficiency of RF1.

The protein localises to the cytoplasm. Its function is as follows. Peptide chain release factor 1 directs the termination of translation in response to the peptide chain termination codons UAG and UAA. This chain is Peptide chain release factor 1, found in Cereibacter sphaeroides (strain ATCC 17029 / ATH 2.4.9) (Rhodobacter sphaeroides).